A 241-amino-acid chain; its full sequence is Large ribosomal subunit protein uL3 (241 aa).

2 disordered regions span residues 139–164 (VSHR…KMPG) and 215–241 (DAPK…QEGA). Q151 is subject to N5-methylglutamine.

Belongs to the universal ribosomal protein uL3 family. In terms of assembly, part of the 50S ribosomal subunit. Forms a cluster with proteins L14 and L19. In terms of processing, methylated by PrmB.

One of the primary rRNA binding proteins, it binds directly near the 3'-end of the 23S rRNA, where it nucleates assembly of the 50S subunit. The polypeptide is Large ribosomal subunit protein uL3 (Rhodopseudomonas palustris (strain BisB5)).